The primary structure comprises 2291 residues: Protein Ycf2 B (2291 aa).

Position 1642 to 1649 (1642 to 1649 (GSIGTGRS)) interacts with ATP.

This sequence belongs to the Ycf2 family.

It localises to the plastid. The protein resides in the chloroplast stroma. Probable ATPase of unknown function. Its presence in a non-photosynthetic plant (Epifagus virginiana) and experiments in tobacco indicate that it has an essential function which is probably not related to photosynthesis. The protein is Protein Ycf2 B (ycf2-B) of Atropa belladonna (Belladonna).